A 566-amino-acid chain; its full sequence is NXPE family member 3 (566 aa).

Residues M1–S32 form the signal peptide. N-linked (GlcNAc...) asparagine glycosylation is found at N64, N172, N242, N303, and N344.

It belongs to the NXPE family.

The protein localises to the secreted. This chain is NXPE family member 3 (nxpe3), found in Danio rerio (Zebrafish).